The primary structure comprises 225 residues: Ribose-5-phosphate isomerase A (225 aa).

Substrate is bound by residues 27–30 (SGST), 82–85 (DGAD), and 95–98 (KGGG). Glu-104 functions as the Proton acceptor in the catalytic mechanism. Lys-122 provides a ligand contact to substrate.

Belongs to the ribose 5-phosphate isomerase family. In terms of assembly, homodimer.

The enzyme catalyses aldehydo-D-ribose 5-phosphate = D-ribulose 5-phosphate. The protein operates within carbohydrate degradation; pentose phosphate pathway; D-ribose 5-phosphate from D-ribulose 5-phosphate (non-oxidative stage): step 1/1. In terms of biological role, catalyzes the reversible conversion of ribose-5-phosphate to ribulose 5-phosphate. The protein is Ribose-5-phosphate isomerase A of Archaeoglobus fulgidus (strain ATCC 49558 / DSM 4304 / JCM 9628 / NBRC 100126 / VC-16).